We begin with the raw amino-acid sequence, 253 residues long: Discoidin-1 subunit B/C (253 aa).

At Ser2 the chain carries N-acetylserine. The F5/8 type C domain occupies Ser2–Gln152. Positions Arg79 to Asp81 match the Cell attachment site motif.

Tetramer of four different chains (A to D). Stalk cells.

It is found in the cytoplasm. In terms of biological role, galactose- and N-acetylgalactosamine-binding lectin. May play a role in cell-substratum adhesion rather than in cell-cell adhesion. May be necessary for the maintenance of normal elongate morphology during aggregation. This chain is Discoidin-1 subunit B/C (dscC-1), found in Dictyostelium discoideum (Social amoeba).